Consider the following 466-residue polypeptide: tRNA-2-methylthio-N(6)-dimethylallyladenosine synthase (466 aa).

One can recognise an MTTase N-terminal domain in the interval 22–139; the sequence is RRYYVWTVGC…VVALAPNPIY (118 aa). 6 residues coordinate [4Fe-4S] cluster: C31, C67, C101, C166, C170, and C173. The 235-residue stretch at 152-386 folds into the Radical SAM core domain; that stretch reads SHPPVSVHVP…EQLQEQIATE (235 aa). One can recognise a TRAM domain in the interval 389 to 449; that stretch reads ARFLGQTVEV…PWSLQGVPQL (61 aa).

It belongs to the methylthiotransferase family. MiaB subfamily. Monomer. It depends on [4Fe-4S] cluster as a cofactor.

It is found in the cytoplasm. It catalyses the reaction N(6)-dimethylallyladenosine(37) in tRNA + (sulfur carrier)-SH + AH2 + 2 S-adenosyl-L-methionine = 2-methylsulfanyl-N(6)-dimethylallyladenosine(37) in tRNA + (sulfur carrier)-H + 5'-deoxyadenosine + L-methionine + A + S-adenosyl-L-homocysteine + 2 H(+). In terms of biological role, catalyzes the methylthiolation of N6-(dimethylallyl)adenosine (i(6)A), leading to the formation of 2-methylthio-N6-(dimethylallyl)adenosine (ms(2)i(6)A) at position 37 in tRNAs that read codons beginning with uridine. The polypeptide is tRNA-2-methylthio-N(6)-dimethylallyladenosine synthase (Chloroflexus aurantiacus (strain ATCC 29366 / DSM 635 / J-10-fl)).